We begin with the raw amino-acid sequence, 87 residues long: Small ribosomal subunit protein bS20 (87 aa).

The tract at residues 1–27 (MANIKSAKKRAVTSEKRRKHNASRRSM) is disordered.

Belongs to the bacterial ribosomal protein bS20 family.

Functionally, binds directly to 16S ribosomal RNA. The polypeptide is Small ribosomal subunit protein bS20 (Erwinia tasmaniensis (strain DSM 17950 / CFBP 7177 / CIP 109463 / NCPPB 4357 / Et1/99)).